Reading from the N-terminus, the 119-residue chain is Beta-2-microglobulin (119 aa).

The signal sequence occupies residues 1-20 (MARFVVVPLFVLLSLFGLEA). The Ig-like C1-type domain occupies 25–114 (PKIQVYSRYP…VTFSTPKTVK (90 aa)). Cys-45 and Cys-100 are disulfide-bonded.

This sequence belongs to the beta-2-microglobulin family. Heterodimer of an alpha chain and a beta chain. Beta-2-microglobulin is the beta-chain of major histocompatibility complex class I molecules.

Its subcellular location is the secreted. Functionally, component of the class I major histocompatibility complex (MHC). Involved in the presentation of peptide antigens to the immune system. The protein is Beta-2-microglobulin (B2M) of Saguinus niger (Black tamarin).